The sequence spans 93 residues: Cell division topological specificity factor (93 aa).

It belongs to the MinE family.

Prevents the cell division inhibition by proteins MinC and MinD at internal division sites while permitting inhibition at polar sites. This ensures cell division at the proper site by restricting the formation of a division septum at the midpoint of the long axis of the cell. This is Cell division topological specificity factor from Alkaliphilus oremlandii (strain OhILAs) (Clostridium oremlandii (strain OhILAs)).